The chain runs to 316 residues: Pantothenate kinase (316 aa).

Residue 95–102 (GSVAVGKS) participates in ATP binding.

This sequence belongs to the prokaryotic pantothenate kinase family.

It localises to the cytoplasm. The catalysed reaction is (R)-pantothenate + ATP = (R)-4'-phosphopantothenate + ADP + H(+). It participates in cofactor biosynthesis; coenzyme A biosynthesis; CoA from (R)-pantothenate: step 1/5. This Escherichia coli O17:K52:H18 (strain UMN026 / ExPEC) protein is Pantothenate kinase.